Here is a 156-residue protein sequence, read N- to C-terminus: Ribosome maturation factor RimP (156 aa).

This sequence belongs to the RimP family.

It is found in the cytoplasm. In terms of biological role, required for maturation of 30S ribosomal subunits. The polypeptide is Ribosome maturation factor RimP (Prochlorococcus marinus (strain NATL2A)).